A 347-amino-acid polypeptide reads, in one-letter code: Protein PET130 (347 aa).

The protein localises to the mitochondrion matrix. The polypeptide is Protein PET130 (PET130) (Saccharomyces cerevisiae (strain ATCC 204508 / S288c) (Baker's yeast)).